Consider the following 301-residue polypeptide: Phosphatidylserine decarboxylase proenzyme (301 aa).

Catalysis depends on charge relay system; for autoendoproteolytic cleavage activity residues aspartate 117, histidine 173, and serine 260. The Schiff-base intermediate with substrate; via pyruvic acid; for decarboxylase activity role is filled by serine 260. Serine 260 bears the Pyruvic acid (Ser); by autocatalysis mark.

It belongs to the phosphatidylserine decarboxylase family. PSD-B subfamily. Prokaryotic type II sub-subfamily. In terms of assembly, heterodimer of a large membrane-associated beta subunit and a small pyruvoyl-containing alpha subunit. It depends on pyruvate as a cofactor. Post-translationally, is synthesized initially as an inactive proenzyme. Formation of the active enzyme involves a self-maturation process in which the active site pyruvoyl group is generated from an internal serine residue via an autocatalytic post-translational modification. Two non-identical subunits are generated from the proenzyme in this reaction, and the pyruvate is formed at the N-terminus of the alpha chain, which is derived from the carboxyl end of the proenzyme. The autoendoproteolytic cleavage occurs by a canonical serine protease mechanism, in which the side chain hydroxyl group of the serine supplies its oxygen atom to form the C-terminus of the beta chain, while the remainder of the serine residue undergoes an oxidative deamination to produce ammonia and the pyruvoyl prosthetic group on the alpha chain. During this reaction, the Ser that is part of the protease active site of the proenzyme becomes the pyruvoyl prosthetic group, which constitutes an essential element of the active site of the mature decarboxylase.

Its subcellular location is the cell membrane. The enzyme catalyses a 1,2-diacyl-sn-glycero-3-phospho-L-serine + H(+) = a 1,2-diacyl-sn-glycero-3-phosphoethanolamine + CO2. The protein operates within phospholipid metabolism; phosphatidylethanolamine biosynthesis; phosphatidylethanolamine from CDP-diacylglycerol: step 2/2. In terms of biological role, catalyzes the formation of phosphatidylethanolamine (PtdEtn) from phosphatidylserine (PtdSer). The polypeptide is Phosphatidylserine decarboxylase proenzyme (Chlamydia trachomatis serovar L2b (strain UCH-1/proctitis)).